A 583-amino-acid chain; its full sequence is Atlastin-2 (583 aa).

Positions 1–44 (MAEGDEAARGQQPHQGLWRRRRTSDPSAAVNHVSSTTSLGENYE) are disordered. The segment at 1–60 (MAEGDEAARGQQPHQGLWRRRRTSDPSAAVNHVSSTTSLGENYEDDDLVNSDEVMKKPCP) is N-terminal hypervariable region (HVR). The Cytoplasmic portion of the chain corresponds to 1–476 (MAEGDEAARG…NIFYAARTPA (476 aa)). Position 24 is a phosphoserine (Ser24). The 246-residue stretch at 91 to 336 (DLNIVVVSVA…LVPLLLAPEN (246 aa)) folds into the GB1/RHD3-type G domain. GDP contacts are provided by Arg104, Lys105, Gly106, Lys107, Ser108, Phe109, Gln175, Arg244, and Asp245. GTP is bound by residues Arg104, Lys105, Gly106, Lys107, Ser108, and Phe109. Position 108 (Ser108) interacts with Mg(2+). Arg244 and Asp245 together coordinate GTP. The stretch at 256 to 284 (LEGGKQFLEKRLQVKQNQHEELQNVRKHI) forms a coiled coil. Lys270 carries the post-translational modification N6-methyllysine. Val303 and Asn306 together coordinate GDP. Val303 serves as a coordination point for GTP. Residues 374 to 465 (MLQATAEANN…YANFIKHNDG (92 aa)) form a 3HB (three-helix bundle) domain region. The interval 466–474 (KNIFYAART) is linker. Residues 477–497 (TLFAVMFAMYIISGLTGFIGL) traverse the membrane as a helical segment. The Lumenal portion of the chain corresponds to 498–499 (NS). The chain crosses the membrane as a helical span at residues 500 to 520 (IAVLCNLVMGLALIFLCTWAY). The Cytoplasmic segment spans residues 521–583 (VKYSGEFREI…VSHHARLKTD (63 aa)). Residues 547-583 (KPLGDNLMEENIRQSVTNSIKAGLTDQVSHHARLKTD) form an autoinhibitory domain region.

This sequence belongs to the TRAFAC class dynamin-like GTPase superfamily. GB1/RHD3 GTPase family. GB1 subfamily. Monomeric and homodimeric. The homodimer, transiently formed by two molecules on opposing membranes, is the active form mediating ER membrane fusion. Interacts with REEP5 and RTN3; these proteins are involved in endoplasmic reticulum tubular network organization. Interacts with ZFYVE27; both proteins are involved in endoplasmic reticulum tubular network organization. Expressed in peripheral tissues (at protein level).

It localises to the endoplasmic reticulum membrane. The catalysed reaction is GTP + H2O = GDP + phosphate + H(+). With respect to regulation, with its alternative C-terminus disrupting the autoinhibitory domain, this brain-specific isoform is probably more active at fusing ER membranes. Its function is as follows. Atlastin-2 (ATL2) is a membrane-anchored GTPase that mediates the GTP-dependent fusion of endoplasmic reticulum (ER) membranes, maintaining the continuous ER network. It facilitates the formation of three-way junctions where ER tubules intersect. Two atlastin-2 on neighboring ER tubules bind GTP and form loose homodimers through the GB1/RHD3-type G domains and 3HB regions. Upon GTP hydrolysis, the 3HB regions tighten, pulling the membranes together to drive their fusion. After fusion, the homodimer disassembles upon release of inorganic phosphate (Pi). Subsequently, GDP dissociates, resetting the monomers to a conformation ready for a new fusion cycle. The sequence is that of Atlastin-2 from Homo sapiens (Human).